The primary structure comprises 103 residues: NADH-quinone oxidoreductase subunit K 2 (103 aa).

Transmembrane regions (helical) follow at residues 7–27 (LAWY…GFMI), 31–51 (IITI…TFVA), and 63–83 (IFVF…LGII).

This sequence belongs to the complex I subunit 4L family. NDH-1 is composed of 14 different subunits. Subunits NuoA, H, J, K, L, M, N constitute the membrane sector of the complex.

Its subcellular location is the cell inner membrane. It carries out the reaction a quinone + NADH + 5 H(+)(in) = a quinol + NAD(+) + 4 H(+)(out). NDH-1 shuttles electrons from NADH, via FMN and iron-sulfur (Fe-S) centers, to quinones in the respiratory chain. The immediate electron acceptor for the enzyme in this species is believed to be ubiquinone. Couples the redox reaction to proton translocation (for every two electrons transferred, four hydrogen ions are translocated across the cytoplasmic membrane), and thus conserves the redox energy in a proton gradient. This is NADH-quinone oxidoreductase subunit K 2 from Koribacter versatilis (strain Ellin345).